Reading from the N-terminus, the 182-residue chain is Protein Syd (182 aa).

This sequence belongs to the Syd family.

It localises to the cell inner membrane. Its function is as follows. Interacts with the SecY protein in vivo. May bind preferentially to an uncomplexed state of SecY, thus functioning either as a chelating agent for excess SecY in the cell or as a regulatory factor that negatively controls the translocase function. The chain is Protein Syd from Pectobacterium atrosepticum (strain SCRI 1043 / ATCC BAA-672) (Erwinia carotovora subsp. atroseptica).